The chain runs to 212 residues: MLHHPGTGQLRALKGTTTVGIVFRDFVVLAADRRATAGYFVAHKRTKKIIKITDYMAMTTAGLVADAQMLAEWLANHTHYYEIVNKRRMSIHAAAQYLSIILHSAKFYPYIVQLLLGGYDTQPRLYNIDWFGSVTEEKYVATGSGSPTAIGVIEDQYSPNLSMEEAVELAKRAVASSIRRDTFTGNGVDVVVIGKDFYREYSFELKDILKTK.

The propeptide at 1 to 15 (MLHHPGTGQLRALKG) is removed in mature form; by autocatalysis. Catalysis depends on Thr-16, which acts as the Nucleophile.

The protein belongs to the peptidase T1B family. The 20S proteasome core is composed of 14 alpha and 14 beta subunits that assemble into four stacked heptameric rings, resulting in a barrel-shaped structure. The two inner rings, each composed of seven catalytic beta subunits, are sandwiched by two outer rings, each composed of seven alpha subunits. The catalytic chamber with the active sites is on the inside of the barrel. Has a gated structure, the ends of the cylinder being occluded by the N-termini of the alpha-subunits. Is capped at one or both ends by the proteasome regulatory ATPase, PAN.

The protein resides in the cytoplasm. The catalysed reaction is Cleavage of peptide bonds with very broad specificity.. Its activity is regulated as follows. The formation of the proteasomal ATPase PAN-20S proteasome complex, via the docking of the C-termini of PAN into the intersubunit pockets in the alpha-rings, triggers opening of the gate for substrate entry. Interconversion between the open-gate and close-gate conformations leads to a dynamic regulation of the 20S proteasome proteolysis activity. In terms of biological role, component of the proteasome core, a large protease complex with broad specificity involved in protein degradation. The polypeptide is Proteasome subunit beta 2 (Hyperthermus butylicus (strain DSM 5456 / JCM 9403 / PLM1-5)).